Here is a 453-residue protein sequence, read N- to C-terminus: Beta-agarase AgaB34 (453 aa).

A signal peptide spans methionine 1–alanine 23. Residues alanine 24–glycine 301 form the GH16 domain. The Nucleophile role is filled by glutamate 147. The Proton donor role is filled by glutamate 152. One can recognise a Ricin B-type lectin domain in the interval proline 313 to leucine 453. 3 disulfides stabilise this stretch: cysteine 327-cysteine 346, cysteine 375-cysteine 394, and cysteine 423-cysteine 442.

The protein belongs to the glycosyl hydrolase 16 family.

It is found in the secreted. The catalysed reaction is Hydrolysis of (1-&gt;4)-beta-D-galactosidic linkages in agarose, giving the tetramer as the predominant product.. The chain is Beta-agarase AgaB34 from Agarivorans albus.